The chain runs to 151 residues: Cytochrome c oxidase subunit 5B, mitochondrial (151 aa).

A mitochondrion-targeting transit peptide spans 1–17 (MLRTSLTKGARLTGTRF). Over 18-85 (VQTKALSKAT…EWGPRRPVHG (68 aa)) the chain is Mitochondrial matrix. The helical transmembrane segment at 86-108 (KGDVAFITKGVFLGLGISFGLFG) threads the bilayer. The Mitochondrial intermembrane portion of the chain corresponds to 109–151 (LVRLLANPETPKTMNREWQLKSDEYLKSKNANPWGGYSQVQSK).

It belongs to the cytochrome c oxidase IV family. As to quaternary structure, component of the cytochrome c oxidase (complex IV, CIV), a multisubunit enzyme composed of 12 subunits. The complex is composed of a catalytic core of 3 subunits COX1, COX2 and COX3, encoded in the mitochondrial DNA, and 9 supernumerary subunits COX4, COX5A (or COX5B), COX6, COX7, COX8, COX9, COX12, COX13 and COX26, which are encoded in the nuclear genome. COX5A is the predominant subunit V during aerobic/normoxic growth, it gets replaced by COX5B under anaerobic/hypoxic conditions. The complex exists as a monomer or a dimer and forms supercomplexes (SCs) in the inner mitochondrial membrane with a dimer of ubiquinol-cytochrome c oxidoreductase (cytochrome b-c1 complex, complex III, CIII), resulting in 2 different assemblies (supercomplexes III(2)IV and III(2)IV(2)).

It is found in the mitochondrion inner membrane. The protein operates within energy metabolism; oxidative phosphorylation. In terms of biological role, component of the cytochrome c oxidase, the last enzyme in the mitochondrial electron transport chain which drives oxidative phosphorylation. The respiratory chain contains 3 multisubunit complexes succinate dehydrogenase (complex II, CII), ubiquinol-cytochrome c oxidoreductase (cytochrome b-c1 complex, complex III, CIII) and cytochrome c oxidase (complex IV, CIV), that cooperate to transfer electrons derived from NADH and succinate to molecular oxygen, creating an electrochemical gradient over the inner membrane that drives transmembrane transport and the ATP synthase. Cytochrome c oxidase is the component of the respiratory chain that catalyzes the reduction of oxygen to water. Electrons originating from reduced cytochrome c in the intermembrane space (IMS) are transferred via the dinuclear copper A center (CU(A)) of COX2 and heme A of COX1 to the active site in COX1, a binuclear center (BNC) formed by heme A3 and copper B (CU(B)). The BNC reduces molecular oxygen to 2 water molecules using 4 electrons from cytochrome c in the IMS and 4 protons from the mitochondrial matrix. The chain is Cytochrome c oxidase subunit 5B, mitochondrial (COX5B) from Saccharomyces cerevisiae (strain ATCC 204508 / S288c) (Baker's yeast).